Consider the following 502-residue polypeptide: Glycogen synthase 1 (502 aa).

K18 contributes to the ADP-alpha-D-glucose binding site.

This sequence belongs to the glycosyltransferase 1 family. Bacterial/plant glycogen synthase subfamily.

It carries out the reaction [(1-&gt;4)-alpha-D-glucosyl](n) + ADP-alpha-D-glucose = [(1-&gt;4)-alpha-D-glucosyl](n+1) + ADP + H(+). The protein operates within glycan biosynthesis; glycogen biosynthesis. Synthesizes alpha-1,4-glucan chains using ADP-glucose. This is Glycogen synthase 1 from Geobacter metallireducens (strain ATCC 53774 / DSM 7210 / GS-15).